The following is a 41-amino-acid chain: Photosystem I reaction center subunit IX (41 aa).

Residues 7 to 27 (YLSTAPVLATLWFGLLAGILI) form a helical membrane-spanning segment.

The protein belongs to the PsaJ family.

Its subcellular location is the plastid. It localises to the chloroplast thylakoid membrane. In terms of biological role, may help in the organization of the PsaE and PsaF subunits. This is Photosystem I reaction center subunit IX from Chara vulgaris (Common stonewort).